We begin with the raw amino-acid sequence, 2958 residues long: Protein CSF1 (2958 aa).

At 1–17 the chain is on the cytoplasmic side; it reads MEAISQLRGVPLTHQKD. The chain crosses the membrane as a helical; Signal-anchor for type II membrane protein span at residues 18 to 38; it reads FSWVFLVDWILTVVVCLTMIF. Topologically, residues 39–2958 are extracellular; sequence YMGRIYAYLV…QYVKILDDTH (2920 aa). N-linked (GlcNAc...) asparagine glycans are attached at residues Asn82, Asn117, Asn144, Asn271, Asn478, Asn530, Asn816, Asn821, Asn839, and Asn892. Positions 813 to 834 are disordered; it reads GYQNSSLKNESEDKGPMKRSDL. Positions 821-834 are enriched in basic and acidic residues; that stretch reads NESEDKGPMKRSDL. Residues 1175–1196 form a disordered region; the sequence is MEPSRASFSEDDNDEEADPSSF. The span at 1183-1192 shows a compositional bias: acidic residues; that stretch reads SEDDNDEEAD. N-linked (GlcNAc...) asparagine glycosylation is found at Asn1309, Asn1368, Asn1453, Asn1785, Asn1921, Asn2130, Asn2146, Asn2280, Asn2337, Asn2520, Asn2578, Asn2719, and Asn2869.

Belongs to the CSF1 family. As to quaternary structure, interacts with MCD4; CSF1 channels phosphatidylethanolamine to MCD4 in the endoplasmic reticulum at contact sites to support GPI anchor biosynthesis.

The protein localises to the cell membrane. The protein resides in the endoplasmic reticulum membrane. It is found in the mitochondrion membrane. In terms of biological role, tube-forming lipid transport protein which provides phosphatidylethanolamine for glycosylphosphatidylinositol (GPI) anchor synthesis in the endoplasmic reticulum. Required for the glucose and other nutrients uptake at low temperature. The protein is Protein CSF1 of Saccharomyces cerevisiae (strain ATCC 204508 / S288c) (Baker's yeast).